Consider the following 903-residue polypeptide: Glutamate receptor ionotropic, NMDA 1 (903 aa).

A signal peptide spans 1-20 (MGTMRLFLLAVLFLFSFARA). Topologically, residues 21–557 (GCDPKIVNIG…TLDSFMQPFQ (537 aa)) are extracellular. 9 N-linked (GlcNAc...) asparagine glycosylation sites follow: asparagine 61, asparagine 203, asparagine 276, asparagine 300, asparagine 350, asparagine 368, asparagine 440, asparagine 469, and asparagine 489. A disulfide bond links cysteine 79 and cysteine 308. 2 cysteine pairs are disulfide-bonded: cysteine 420-cysteine 452 and cysteine 436-cysteine 453. Residues proline 514, threonine 516, and arginine 521 each contribute to the glycine site. The helical transmembrane segment at 558–578 (STLWLLVGLSVHVVAVMLYLL) threads the bilayer. Residues 579–600 (DRFSPFGRFKVNSEEEEEDALT) are Cytoplasmic-facing. The segment at 601–620 (LSSAMWFSWGVLLNSGIGEG) is pore-forming. An intramembrane region (discontinuously helical) is located at residues 601 to 622 (LSSAMWFSWGVLLNSGIGEGAP). Residues 623–628 (RSFSAR) lie on the Cytoplasmic side of the membrane. A helical membrane pass occupies residues 629–645 (ILGMVWAGFAMIIVASY). The Extracellular portion of the chain corresponds to 646–810 (TANLAAFLVL…NAPATLTFEN (165 aa)). Residues serine 686 and aspartate 730 each contribute to the glycine site. A disulfide bridge links cysteine 742 with cysteine 796. A glycan (N-linked (GlcNAc...) asparagine) is linked at asparagine 769. Residues 811–831 (MAGVFMLVAGGIVAGIFLIFI) form a helical membrane-spanning segment. The Cytoplasmic segment spans residues 832–903 (EIAYKRHKDA…SSKDTVNVVV (72 aa)).

Belongs to the glutamate-gated ion channel (TC 1.A.10.1) family. NR1/GRIN1 subfamily. In terms of assembly, heterotetramer; the NMDAR subunits are modular and harbor tiered domains that function in concert to regulate opening and closing of the cation-selective ion channel pore. Forms heterotetrameric channels composed of two GluN1/zeta subunits (GRIN1), and two identical GluN2/epsilon subunits (GRIN2A, GRIN2B, GRIN2C or GRIN2D) or GluN3 subunits (GRIN3A or GRIN3B) (in vitro). Does not form functional channels by itself. Can also form heterotetrameric channels that contain at least two GluN1 subunits and at least two different GluN2 subunits (or a combination of one GluN2 and one GluN3 subunits) (in vitro). In vivo, the subunit composition may vary in function of the expression levels of the different subunits.

Its subcellular location is the cell membrane. The protein localises to the postsynaptic cell membrane. It localises to the postsynaptic density membrane. It is found in the synaptic cell membrane. The enzyme catalyses Ca(2+)(in) = Ca(2+)(out). It catalyses the reaction Na(+)(in) = Na(+)(out). It carries out the reaction K(+)(in) = K(+)(out). With respect to regulation, NMDA glutamate receptor activity is modulated by zinc ions. The NMDA glutamate receptor activity of the heterotetramer with grin2b is stimulated by micromolar levels of Zn(2+). The NMDA glutamate receptor activity of the heterotetramer with grin2a is inhibited by nanomolar levels of Zn(2+). Its function is as follows. Component of N-methyl-D-aspartate (NMDA) receptors (NMDARs) that function as heterotetrameric, ligand-gated cation channels with high calcium permeability and voltage-dependent block by Mg(2+). NMDARs participate in synaptic plasticity. Channel activation requires binding of the neurotransmitter L-glutamate to the GluN2 subunit, glycine binding to the GluN1 subunit, plus membrane depolarization to eliminate channel inhibition by Mg(2+). NMDARs mediate simultaneously the potasium efflux and the influx of calcium and sodium. Each GluN2 or GluN3 subunit confers differential attributes to channel properties, including activation, deactivation and desensitization kinetics, pH sensitivity, Ca2(+) permeability, and binding to allosteric modulators. This Xenopus laevis (African clawed frog) protein is Glutamate receptor ionotropic, NMDA 1.